A 644-amino-acid polypeptide reads, in one-letter code: Protein SNOWY COTYLEDON 3 (644 aa).

Disordered stretches follow at residues 1-129, 162-252, and 290-414; these read MVAA…TRTE, ETAT…DGRL, and SDTD…SRVR. The segment covering 53–77 has biased composition (low complexity); it reads SPSPSHSTTTTTTTATSTSTSSSSS. Polar residues predominate over residues 91–112; that stretch reads LSRTTNSASNLVYTPSSLPKRS. Positions 172-190 are enriched in basic and acidic residues; that stretch reads CTPERRRATPVRDQRENSK. Polar residues-rich tracts occupy residues 290–302 and 314–332; these read SDTDSVSSGSTNG and TRSLPRNGMASTKFWQETN. 2 stretches are compositionally biased toward low complexity: residues 343-370 and 397-412; these read SPQCSSPSSRISSISSKFSQSKRFSSDS and ATATSAPARTSSSPSR. The QWRF motif motif lies at 463–466; it reads QWRF.

It belongs to the QWRF family. As to expression, expressed in young developing tissues, such as seedlings, roots, flowers, buds and young siliques, and to a lesser extent in mature green tissues.

The protein resides in the peroxisome. Functionally, probable microtubule-associated peroxisomal protein required for chloroplast biogenesis and for the formation of the prolamellar body and prothylakoids in etioplasts. Not involved in peroxisomal metabolism, including mobilization of storage compounds during germination, fatty acid beta-oxydation or photorespiration. The polypeptide is Protein SNOWY COTYLEDON 3 (SCO3) (Arabidopsis thaliana (Mouse-ear cress)).